Reading from the N-terminus, the 77-residue chain is TSC22 domain family protein 3 (77 aa).

At methionine 1 the chain carries N-acetylmethionine. The tract at residues 19–40 (LKEQIRELVEKNSQLERENTLL) is leucine-zipper. Positions 41–77 (KTLASPEQLEKFQSRLSPEEPAPETPEAPEAPGGSAV) are disordered. The residue at position 45 (serine 45) is a Phosphoserine. The span at 68-77 (APEAPGGSAV) shows a compositional bias: low complexity.

This sequence belongs to the TSC-22/Dip/Bun family. In terms of assembly, can form homodimers, however it is likely to function as a monomer. Interacts with AP1 and NFKB1. Interacts with MYOD1. Interacts with HDAC1; this interaction affects HDAC1 activity on MYOG promoter and thus inhibits MYOD1 transcriptional activity.

It localises to the cytoplasm. It is found in the nucleus. Functionally, protects T-cells from IL2 deprivation-induced apoptosis through the inhibition of FOXO3A transcriptional activity that leads to the down-regulation of the pro-apoptotic factor BCL2L11. In macrophages, plays a role in the anti-inflammatory and immunosuppressive effects of glucocorticoids and IL10. In T-cells, inhibits anti-CD3-induced NFKB1 nuclear translocation. In vitro, suppresses AP1 and NFKB1 DNA-binding activities. Inhibits myogenic differentiation and mediates anti-myogenic effects of glucocorticoids by binding and regulating MYOD1 and HDAC1 transcriptional activity resulting in reduced expression of MYOG. The chain is TSC22 domain family protein 3 (TSC22D3) from Sus scrofa (Pig).